A 117-amino-acid chain; its full sequence is Zinc metalloproteinase/disintegrin (117 aa).

Positions 36-117 (TPVSGNELLE…AGCPRNPFHA (82 aa)) constitute a Disintegrin domain. Cystine bridges form between cysteine 50–cysteine 65, cysteine 52–cysteine 60, cysteine 59–cysteine 82, cysteine 73–cysteine 79, cysteine 78–cysteine 103, and cysteine 91–cysteine 110. A Cell attachment site motif is present at residues 95–97 (RGD).

This sequence belongs to the venom metalloproteinase (M12B) family. P-II subfamily. P-IIa sub-subfamily. Monomer. Zn(2+) serves as cofactor. Expressed by the venom gland.

It localises to the secreted. Functionally, impairs hemostasis in the envenomed animal. In terms of biological role, inhibits platelet aggregation and bone resorption. This chain is Zinc metalloproteinase/disintegrin, found in Gloydius halys (Chinese water mocassin).